Reading from the N-terminus, the 307-residue chain is Alpha/beta-gliadin MM1 (307 aa).

An N-terminal signal peptide occupies residues 1–20 (MKTFLILALLAIVATTARIA). Low complexity predominate over residues 29–55 (QPQNPSQQQPQEQVPLVQQQQFPGQQQ). Disordered stretches follow at residues 29 to 134 (QPQN…QQQQ) and 242 to 267 (QQQY…SVQP). 2 stretches are compositionally biased toward pro residues: residues 56–71 (PFPP…PFPS) and 81–113 (FPQP…PQQP). Positions 76–108 (LQLQPFPQPQLPYPQPQLPYPQPQLPYPQPQPF) are sufficient to initiate the primary inflammatory response to gluten in Celiac Sprue patients. Low complexity-rich tracts occupy residues 114–134 (YPQS…QQQQ) and 242–260 (QQQY…QNPQ).

The protein belongs to the gliadin/glutenin family. Substrate of transglutaminase. In terms of tissue distribution, expressed in endosperm.

Functionally, gliadin is the major seed storage protein in wheat. The protein is Alpha/beta-gliadin MM1 of Triticum aestivum (Wheat).